We begin with the raw amino-acid sequence, 1045 residues long: Pre-mRNA-splicing factor ATP-dependent RNA helicase DHX16 (1045 aa).

A disordered region spans residues 101–211 (EDSEESSEEA…ERSDKKAYEE (111 aa)). Ser103, Ser106, and Ser107 each carry phosphoserine. Positions 119-131 (QKKRKKRKHLRKK) are enriched in basic residues. A compositionally biased stretch (acidic residues) spans 135–144 (EEEEEEEEEV). The residue at position 164 (Ser164) is a Phosphoserine. A compositionally biased stretch (basic and acidic residues) spans 170–211 (RTERERLQDLEERDAFAERVRQRDKDRTRNVLERSDKKAYEE). Residues 413–577 (LAAVANHQIL…FDDAPVFRIP (165 aa)) form the Helicase ATP-binding domain. Position 426-433 (426-433 (GETGSGKT)) interacts with ATP. The short motif at 524-527 (DEAH) is the DEAH box element. The 174-residue stretch at 602–775 (SVLQIHVTQP…NVVLLLKSLG (174 aa)) folds into the Helicase C-terminal domain. A Phosphothreonine modification is found at Thr716. The tract at residues 1026–1045 (EDPHAKKMPKKTGKTREELG) is disordered.

This sequence belongs to the DEAD box helicase family. DEAH subfamily. DDX16/PRP8 sub-subfamily. In terms of assembly, component of pre-catalytic spliceosome complexes. Component of the minor spliceosome, which splices U12-type introns. Interacts with GPKOW. Interacts with TRIM6. Interacts with RIGI.

The protein resides in the nucleus. The protein localises to the nucleoplasm. Its subcellular location is the cytoplasm. The enzyme catalyses ATP + H2O = ADP + phosphate + H(+). Functionally, required for pre-mRNA splicing as a component of the spliceosome. Contributes to pre-mRNA splicing after spliceosome formation and prior to the first transesterification reaction. As a component of the minor spliceosome, involved in the splicing of U12-type introns in pre-mRNAs. Also plays a role in innate antiviral response by acting as a pattern recognition receptor sensing splicing signals in viral RNA. Mechanistically, TRIM6 promotes the interaction between unanchored 'Lys-48'-polyubiquitin chains and DHX16, leading to DHX16 interaction with RIGI and ssRNA to amplify RIGI-dependent innate antiviral immune responses. In Sus scrofa (Pig), this protein is Pre-mRNA-splicing factor ATP-dependent RNA helicase DHX16 (DHX16).